The sequence spans 338 residues: 4-hydroxy-3-methylbut-2-enyl diphosphate reductase (338 aa).

[4Fe-4S] cluster is bound at residue Cys21. (2E)-4-hydroxy-3-methylbut-2-enyl diphosphate-binding residues include His50 and His83. Dimethylallyl diphosphate is bound by residues His50 and His83. 2 residues coordinate isopentenyl diphosphate: His50 and His83. [4Fe-4S] cluster is bound at residue Cys105. (2E)-4-hydroxy-3-methylbut-2-enyl diphosphate is bound at residue His133. His133 serves as a coordination point for dimethylallyl diphosphate. His133 contacts isopentenyl diphosphate. The active-site Proton donor is the Glu135. Thr173 provides a ligand contact to (2E)-4-hydroxy-3-methylbut-2-enyl diphosphate. [4Fe-4S] cluster is bound at residue Cys203. The (2E)-4-hydroxy-3-methylbut-2-enyl diphosphate site is built by Ser231, Ser232, Asn233, and Ser276. Dimethylallyl diphosphate-binding residues include Ser231, Ser232, Asn233, and Ser276. The isopentenyl diphosphate site is built by Ser231, Ser232, Asn233, and Ser276.

Belongs to the IspH family. [4Fe-4S] cluster is required as a cofactor.

It carries out the reaction isopentenyl diphosphate + 2 oxidized [2Fe-2S]-[ferredoxin] + H2O = (2E)-4-hydroxy-3-methylbut-2-enyl diphosphate + 2 reduced [2Fe-2S]-[ferredoxin] + 2 H(+). The enzyme catalyses dimethylallyl diphosphate + 2 oxidized [2Fe-2S]-[ferredoxin] + H2O = (2E)-4-hydroxy-3-methylbut-2-enyl diphosphate + 2 reduced [2Fe-2S]-[ferredoxin] + 2 H(+). It functions in the pathway isoprenoid biosynthesis; dimethylallyl diphosphate biosynthesis; dimethylallyl diphosphate from (2E)-4-hydroxy-3-methylbutenyl diphosphate: step 1/1. Its pathway is isoprenoid biosynthesis; isopentenyl diphosphate biosynthesis via DXP pathway; isopentenyl diphosphate from 1-deoxy-D-xylulose 5-phosphate: step 6/6. In terms of biological role, catalyzes the conversion of 1-hydroxy-2-methyl-2-(E)-butenyl 4-diphosphate (HMBPP) into a mixture of isopentenyl diphosphate (IPP) and dimethylallyl diphosphate (DMAPP). Acts in the terminal step of the DOXP/MEP pathway for isoprenoid precursor biosynthesis. The sequence is that of 4-hydroxy-3-methylbut-2-enyl diphosphate reductase from Streptomyces avermitilis (strain ATCC 31267 / DSM 46492 / JCM 5070 / NBRC 14893 / NCIMB 12804 / NRRL 8165 / MA-4680).